The primary structure comprises 390 residues: Glutamyl-tRNA reductase (390 aa).

Substrate is bound by residues 46–49 (TCNR), serine 96, 101–103 (EAQ), and glutamine 107. The Nucleophile role is filled by cysteine 47. 176–181 (GAGEMA) contributes to the NADP(+) binding site.

Belongs to the glutamyl-tRNA reductase family. Homodimer.

It catalyses the reaction (S)-4-amino-5-oxopentanoate + tRNA(Glu) + NADP(+) = L-glutamyl-tRNA(Glu) + NADPH + H(+). It participates in porphyrin-containing compound metabolism; protoporphyrin-IX biosynthesis; 5-aminolevulinate from L-glutamyl-tRNA(Glu): step 1/2. Catalyzes the NADPH-dependent reduction of glutamyl-tRNA(Glu) to glutamate 1-semialdehyde (GSA). The chain is Glutamyl-tRNA reductase from Thermus thermophilus (strain ATCC 27634 / DSM 579 / HB8).